The primary structure comprises 768 residues: MRMELISVIFFFFCSVLSSSALNSDGLVLMKFKSSVLVDPLSLLQTWNYKHESPCSWRGISCNNDSKVLTLSLPNSQLLGSIPSDLGSLLTLQSLDLSNNSFNGPLPVSFFNARELRFLDLSSNMISGEIPSAIGDLHNLLTLNLSDNALAGKLPTNLASLRNLTVVSLENNYFSGEIPGGWRVVEFLDLSSNLINGSLPPDFGGYSLQYLNVSFNQISGEIPPEIGVNFPRNVTVDLSFNNLTGPIPDSPVFLNQESNFFSGNPGLCGEPTRNPCLIPSSPSIVSEADVPTSTPAIAAIPNTIGSNPVTDPNSQQTDPNPRTGLRPGVIIGIVVGDIAGIGILAVIFLYIYRCKKNKIVDNNNNDKQRTETDTITLSTFSSSSSSPEESRRFRKWSCLRKDPETTPSEEEDEDDEDEESGYNANQRSGDNKLVTVDGEKEMEIETLLKASAYILGATGSSIMYKAVLEDGRVFAVRRLGENGLSQRRFKDFEPHIRAIGKLVHPNLVRLCGFYWGTDEKLVIYDFVPNGSLVNPRYRKGGGSSSPYHLPWETRLKIAKGIARGLAYLHEKKHVHGNLKPSNILLGHDMEPKIGDFGLERLLTGETSYIRAGGSSRIFSSKRYTTSSREFSSIGPTPSPSPSSVGAMSPYCAPESFRSLKPSPKWDVYGFGVILLELLTGKIVSVEEIVLGNGLTVEDGHRAVRMADVAIRGELDGKQEFLLDCFKLGYSCASPVPQKRPTMKESLAVLERFHPNSSVIKSSSFHYGH.

An N-terminal signal peptide occupies residues 1 to 21 (MRMELISVIFFFFCSVLSSSA). The Extracellular segment spans residues 22-328 (LNSDGLVLMK…PNPRTGLRPG (307 aa)). A glycan (N-linked (GlcNAc...) asparagine) is linked at asparagine 64. 8 LRR repeats span residues 67–90 (KVLT…GSLL), 91–112 (TLQS…SFFN), 115–137 (ELRF…IGDL), 139–162 (NLLT…ASLR), 163–183 (NLTV…GGWR), 184–206 (VVEF…FGGY), 207–229 (SLQY…IGVN), and 232–254 (RNVT…PVFL). The N-linked (GlcNAc...) asparagine glycan is linked to asparagine 99. Asparagine 144, asparagine 163, asparagine 196, asparagine 212, asparagine 233, and asparagine 242 each carry an N-linked (GlcNAc...) asparagine glycan. Residues 301-324 (PNTIGSNPVTDPNSQQTDPNPRTG) are disordered. Positions 303–320 (TIGSNPVTDPNSQQTDPN) are enriched in polar residues. A helical transmembrane segment spans residues 329–349 (VIIGIVVGDIAGIGILAVIFL). At 350–768 (YIYRCKKNKI…IKSSSFHYGH (419 aa)) the chain is on the cytoplasmic side. The interval 361-432 (DNNNNDKQRT…NANQRSGDNK (72 aa)) is disordered. Residues 378-387 (STFSSSSSSP) show a composition bias toward low complexity. Residues 407–420 (PSEEEDEDDEDEES) show a composition bias toward acidic residues. Residues 449–756 (KASAYILGAT…AVLERFHPNS (308 aa)) enclose the Protein kinase domain. Phosphoserine occurs at positions 451 and 531. Threonine 553 bears the Phosphothreonine mark. Position 662 is a phosphoserine (serine 662).

This sequence belongs to the protein kinase superfamily. Ser/Thr protein kinase family.

It localises to the membrane. It catalyses the reaction L-seryl-[protein] + ATP = O-phospho-L-seryl-[protein] + ADP + H(+). The catalysed reaction is L-threonyl-[protein] + ATP = O-phospho-L-threonyl-[protein] + ADP + H(+). The sequence is that of Probable LRR receptor-like serine/threonine-protein kinase At4g37250 from Arabidopsis thaliana (Mouse-ear cress).